Consider the following 533-residue polypeptide: MAFANLRKVLISDSLDPCCRKILQDGGLQVVEKQNLSKEELIAELQDCEGLIVRSATKVTADVINAAEKLQVVGRAGTGVDNVDLEAATRKGILVMNTPNGNSLSAAELTCGMIMCLARQIPQATASMKDGKWERKKFMGTELNGKTLGILGLGRIGREVAIRMQSLGMKTIGYDPIISPEVSASFGVQQLPLEEIWPLCDFITVHTPLLPSTTGLLNDNTFAQCKKGVRVVNCARGGIVDEGALLRALQSGQCAGAALDVFTEEPPRGRALVDHENVISCPHLGASTKEAQSRCGEEIAVQFVDMVKGKSLTGVVNAQALTSAFSPHTKPWIGLAEALGTLMRAWAGSPKGAIQVITQGTSLKNAGNCLSPAVIVGLLKEASKQADVNLVNAKLLVKEAGLNVTTSHSPAAPGEQGFGECLLAVALAGAPYQAVGLVQGTTPVLQGLNGAVFRPEVPLRRDLPLLLFRTQTSDPAMLPTMIGLLAEAGVRLLSYQTSLVSDGETWHVMGISSLLPSLEAWKQHATEAFQFHF.

Ala-2 is subject to N-acetylalanine. The residue at position 14 (Ser-14) is a Phosphoserine. Lys-21 bears the N6-acetyllysine; alternate mark. Lys-21 participates in a covalent cross-link: Glycyl lysine isopeptide (Lys-Gly) (interchain with G-Cter in SUMO1); alternate. Residue Lys-21 forms a Glycyl lysine isopeptide (Lys-Gly) (interchain with G-Cter in SUMO2); alternate linkage. Lys-58 carries the post-translational modification N6-acetyllysine. NAD(+) contacts are provided by residues Thr-78, 155-156 (RI), Asp-175, Thr-207, 234-236 (CAR), and Asp-260. Phosphothreonine is present on Thr-78. Arg-236 is an active-site residue. Glu-265 is an active-site residue. Catalysis depends on His-283, which acts as the Proton donor. Residue 283–286 (HLGA) coordinates NAD(+).

It belongs to the D-isomer specific 2-hydroxyacid dehydrogenase family. Homotetramer.

The enzyme catalyses (2R)-3-phosphoglycerate + NAD(+) = 3-phosphooxypyruvate + NADH + H(+). It carries out the reaction (R)-2-hydroxyglutarate + NAD(+) = 2-oxoglutarate + NADH + H(+). It catalyses the reaction (S)-malate + NAD(+) = oxaloacetate + NADH + H(+). It participates in amino-acid biosynthesis; L-serine biosynthesis; L-serine from 3-phospho-D-glycerate: step 1/3. In terms of biological role, catalyzes the reversible oxidation of 3-phospho-D-glycerate to 3-phosphonooxypyruvate, the first step of the phosphorylated L-serine biosynthesis pathway. Also catalyzes the reversible oxidation of 2-hydroxyglutarate to 2-oxoglutarate and the reversible oxidation of (S)-malate to oxaloacetate. This is D-3-phosphoglycerate dehydrogenase (PHGDH) from Pongo abelii (Sumatran orangutan).